Consider the following 196-residue polypeptide: Protein GrpE (196 aa).

The tract at residues 1-41 (MSSKEQKTPEGQAPEEIITEQHDDVEAVEPEVSAEQVDPRD) is disordered.

This sequence belongs to the GrpE family. Homodimer.

It localises to the cytoplasm. Participates actively in the response to hyperosmotic and heat shock by preventing the aggregation of stress-denatured proteins, in association with DnaK and GrpE. It is the nucleotide exchange factor for DnaK and may function as a thermosensor. Unfolded proteins bind initially to DnaJ; upon interaction with the DnaJ-bound protein, DnaK hydrolyzes its bound ATP, resulting in the formation of a stable complex. GrpE releases ADP from DnaK; ATP binding to DnaK triggers the release of the substrate protein, thus completing the reaction cycle. Several rounds of ATP-dependent interactions between DnaJ, DnaK and GrpE are required for fully efficient folding. In Klebsiella pneumoniae subsp. pneumoniae (strain ATCC 700721 / MGH 78578), this protein is Protein GrpE.